Here is a 258-residue protein sequence, read N- to C-terminus: NAD kinase (258 aa).

The Proton acceptor role is filled by aspartate 51. NAD(+)-binding positions include aspartate 51–glycine 52, lysine 56, asparagine 119–aspartate 120, lysine 130, aspartate 149, threonine 160–serine 165, and alanine 184.

This sequence belongs to the NAD kinase family. It depends on a divalent metal cation as a cofactor.

The protein resides in the cytoplasm. The enzyme catalyses NAD(+) + ATP = ADP + NADP(+) + H(+). Involved in the regulation of the intracellular balance of NAD and NADP, and is a key enzyme in the biosynthesis of NADP. Catalyzes specifically the phosphorylation on 2'-hydroxyl of the adenosine moiety of NAD to yield NADP. The sequence is that of NAD kinase from Thermotoga sp. (strain RQ2).